The following is a 568-amino-acid chain: Nucleoprotein (568 aa).

The interval 54 to 240 (MRKEKRDDSD…IDGNKSAINI (187 aa)) is binding site for the cap structure m7GTP. Mn(2+) is bound by residues Asp-388 and Glu-390. The Zn(2+) site is built by Glu-398, Cys-505, His-508, and Cys-528. Asp-532 provides a ligand contact to Mn(2+).

The protein belongs to the arenaviridae nucleocapsid protein family. Homomultimerizes to form the nucleocapsid. Binds to viral genomic RNA. Interacts with glycoprotein G2. Interacts with protein Z; this interaction probably directs the encapsidated genome to budding sites. Interacts with protein L; this interaction does not interfere with Z-L interaction. Interacts with host IKBKE (via Protein kinase domain); the interaction inhibits IKBKE kinase activity.

The protein localises to the virion. It is found in the host cytoplasm. Encapsidates the genome, protecting it from nucleases. The encapsidated genomic RNA is termed the nucleocapsid (NC). Serves as template for viral transcription and replication. The increased presence of protein N in host cell does not seem to trigger the switch from transcription to replication as observed in other negative strain RNA viruses. Through the interaction with host IKBKE, strongly inhibits the phosphorylation and nuclear translocation of host IRF3, a protein involved in interferon activation pathway, leading to the inhibition of interferon-beta and IRF3-dependent promoters activation. Also encodes a functional 3'-5' exoribonuclease that degrades preferentially dsRNA substrates and thereby participates in the suppression of interferon induction. In Praomys (African soft-furred rats), this protein is Nucleoprotein.